The sequence spans 860 residues: MKSSEIRQAFLNYFVQRGHQLVASSSLIPSNDPTLLFTNAGMVQFKDLFLGLETRPYQRAVTAQRCVRAGGKHNDLENVGYTARHHTFFEMLGNFSFGDYFKREAIQYAWEFLTEVLHIPAERLWVTVYKEDLEAEGIWLKEMKVSPERFSRCGEKDNFWSMGDTGPCGPCTEIFYDHGPEVAGGPPGSPDEDGDRYIEIWNLVFMQFNRDREGCLHPLPKPSVDTGMGLERLAAVIQGVHSNYEIDSFQYLIKAIAQLGQDIDLNHTSLKVIADHIRSCSFLIVDGVLPSNEGRGYVLRRIIRRAVRHGNKLGLPSPFFFKLVQPLIDVMGDAYPELINSKAHIERILQQEENQFTRTLEQGLRLLQDHIKNLKGQELSGEVAFKLYDTYGFPIDLTADIIREQGLHIDMEAFNQLMQQQREQSQAASQFTTDYHAVSQLDHQSEFHGYEKESMEAKIIGLLQEGNEVKSLNKGAKGAVILDHTPFYAESGGQVGDKGLLIGKEFSFQVDDTQKVGQAVVHYGEVIKGELTLDLSIHAQVDHIRRDAIRLNHTATHLLHAALKQIVGQHVQQRGSLVDAERARFDFSHFEPLTPQQIQQIEEVVNAQIRANNEVITQVMDIESAKQSGAVALFGEKYSDAVRVLSMGDFSKELCGGTHARRTGDIGLFKIVAEYGIASGIRRVEMVTGRYALAWVNEQLGFMNNLAATLKTTPNSLQEKVSQLLLDNKNQEKMIAKLLSEKAQKSGADILGEIEEIKGINLLIKQLEGMDSQTMRHTMDQLKSRIDSAVIILFTIEQNKMNVIAGVSKNIIGKTPNAAQLVRHLCGKGGGRDDMAQGGGDVPEDLNSKIKEIKEMIEKN.

Zn(2+) is bound by residues H553, H557, C655, and H659.

It belongs to the class-II aminoacyl-tRNA synthetase family. Zn(2+) is required as a cofactor.

It localises to the cytoplasm. The enzyme catalyses tRNA(Ala) + L-alanine + ATP = L-alanyl-tRNA(Ala) + AMP + diphosphate. In terms of biological role, catalyzes the attachment of alanine to tRNA(Ala) in a two-step reaction: alanine is first activated by ATP to form Ala-AMP and then transferred to the acceptor end of tRNA(Ala). Also edits incorrectly charged Ser-tRNA(Ala) and Gly-tRNA(Ala) via its editing domain. In Legionella pneumophila (strain Lens), this protein is Alanine--tRNA ligase.